Here is a 576-residue protein sequence, read N- to C-terminus: Vacuolar protein sorting-associated protein vps5 (576 aa).

2 disordered regions span residues 1 to 60 (MLGH…PRKR) and 156 to 198 (DAAS…APQS). A Phosphothreonine modification is found at threonine 55. Polar residues predominate over residues 156–169 (DAASSSAPNFTHTV). Residues 170 to 181 (SSASSQKQGSTS) are compositionally biased toward low complexity. A PX domain is found at 200–317 (TPFYIQVHDP…KLFLEAETFD (118 aa)). A 1,2-diacyl-sn-glycero-3-phospho-(1D-myo-inositol-3-phosphate) is bound by residues arginine 244, lysine 270, and arginine 284. Serine 332 carries the phosphoserine modification.

It belongs to the sorting nexin family. Component of the retromer complex which consists of vps29, vps26, vps35, vps5 and vps17.

Its subcellular location is the cytoplasm. The protein localises to the golgi apparatus. It localises to the membrane. Required for efficient sporulation target of PtdIns(3)P in vesicle transport required for onset of the forespore membrane formation. Its function is as follows. Plays a role in vesicular protein sorting. Required for the endosome-to-Golgi retrieval of the vacuolar protein sorting receptor pep1/vps10. Component of the membrane-associated retromer complex which is essential in endosome-to-Golgi retrograde transport. The vps29-vps26-vps35 subcomplex may be involved in cargo selection. The polypeptide is Vacuolar protein sorting-associated protein vps5 (vps5) (Schizosaccharomyces pombe (strain 972 / ATCC 24843) (Fission yeast)).